Here is a 1265-residue protein sequence, read N- to C-terminus: Guanine nucleotide exchange factor SDC25 (1265 aa).

One can recognise an SH3 domain in the interval 26–97; the sequence is QPIDVVECTY…PPSFTRSILN (72 aa). Disordered regions lie at residues 409–454 and 623–648; these read IPAS…DTIW and LNLD…DEYE. Residues 416 to 428 are compositionally biased toward low complexity; the sequence is TSCSSETSHHSPS. The N-terminal Ras-GEF domain occupies 782–914; the sequence is SNNRIKGGSK…LLKEVNQKFK (133 aa). A Ras-GEF domain is found at 952–1199; it reads DPVLFATQLT…YQLSLIIEPK (248 aa). The tract at residues 1201 to 1252 is disordered; it reads RKKVVPNSNSNNKSQEKSRDDQTDEGKTSTKKDRFSKFQLHKTKKKAPKVSK. Over residues 1214–1236 the composition is skewed to basic and acidic residues; the sequence is SQEKSRDDQTDEGKTSTKKDRFS. Over residues 1239–1252 the composition is skewed to basic residues; it reads QLHKTKKKAPKVSK.

Its function is as follows. Promotes the exchange of Ras-bound GDP by GTP. The sequence is that of Guanine nucleotide exchange factor SDC25 (SDC25) from Saccharomyces cerevisiae (strain AWRI1631) (Baker's yeast).